The chain runs to 251 residues: Segregation and condensation protein A (251 aa).

It belongs to the ScpA family. As to quaternary structure, component of a cohesin-like complex composed of ScpA, ScpB and the Smc homodimer, in which ScpA and ScpB bind to the head domain of Smc. The presence of the three proteins is required for the association of the complex with DNA.

The protein localises to the cytoplasm. Functionally, participates in chromosomal partition during cell division. May act via the formation of a condensin-like complex containing Smc and ScpB that pull DNA away from mid-cell into both cell halves. In Bacillus velezensis (strain DSM 23117 / BGSC 10A6 / LMG 26770 / FZB42) (Bacillus amyloliquefaciens subsp. plantarum), this protein is Segregation and condensation protein A.